Here is a 200-residue protein sequence, read N- to C-terminus: Pyridoxine/pyridoxamine 5'-phosphate oxidase (200 aa).

Residues 48–53 (RMVLLK), 63–64 (YT), Lys70, and Gln92 contribute to the FMN site. Lys53 is a substrate binding site. Tyr110, Arg114, and Ser118 together coordinate substrate. FMN contacts are provided by residues 127–128 (QS) and Trp171. 177 to 179 (RLH) contacts substrate. Arg181 is an FMN binding site.

This sequence belongs to the pyridoxamine 5'-phosphate oxidase family. In terms of assembly, homodimer. FMN serves as cofactor.

The catalysed reaction is pyridoxamine 5'-phosphate + O2 + H2O = pyridoxal 5'-phosphate + H2O2 + NH4(+). It carries out the reaction pyridoxine 5'-phosphate + O2 = pyridoxal 5'-phosphate + H2O2. It participates in cofactor metabolism; pyridoxal 5'-phosphate salvage; pyridoxal 5'-phosphate from pyridoxamine 5'-phosphate: step 1/1. Its pathway is cofactor metabolism; pyridoxal 5'-phosphate salvage; pyridoxal 5'-phosphate from pyridoxine 5'-phosphate: step 1/1. In terms of biological role, catalyzes the oxidation of either pyridoxine 5'-phosphate (PNP) or pyridoxamine 5'-phosphate (PMP) into pyridoxal 5'-phosphate (PLP). This Cereibacter sphaeroides (strain ATCC 17029 / ATH 2.4.9) (Rhodobacter sphaeroides) protein is Pyridoxine/pyridoxamine 5'-phosphate oxidase.